The sequence spans 231 residues: Dephospho-CoA kinase domain-containing protein (231 aa).

In terms of domain architecture, DPCK spans Leu-3 to Phe-207. Residue Gly-8–Ser-15 participates in ATP binding.

The protein belongs to the CoaE family.

The sequence is that of Dephospho-CoA kinase domain-containing protein (DCAKD) from Homo sapiens (Human).